The primary structure comprises 157 residues: Ribosome maturation factor RimP (157 aa).

This sequence belongs to the RimP family.

The protein localises to the cytoplasm. Its function is as follows. Required for maturation of 30S ribosomal subunits. In Synechococcus sp. (strain CC9311), this protein is Ribosome maturation factor RimP.